Reading from the N-terminus, the 541-residue chain is Pseudokinase FAM20A (541 aa).

The N-terminal stretch at 1 to 33 (MPGLRRDRLLALLLLGALFSADLYFHLWPQVQR) is a signal peptide. Residues N70, N145, and N287 are each glycosylated (N-linked (GlcNAc...) asparagine). 4 cysteine pairs are disulfide-bonded: C314/C330, C319/C323, C378/C452, and C453/C512. N-linked (GlcNAc...) asparagine glycosylation occurs at N388. An N-linked (GlcNAc...) asparagine glycan is attached at N538.

This sequence belongs to the FAM20 family. In terms of assembly, interacts with FAM20C; probably forming a heterotetramer of 2 subunits of FAM20A and 2 subunits of FAM20C. In terms of processing, N-glycosylated. In terms of tissue distribution, in the mammary gland, expressed at higher levels in lactating mice than in virgin mice. Observed throughout the tissues of the mandibular incisor, including the secretory and maturation stage ameloblasts, the suprabasal layers of the gingival epithelium and the odontoblasts. Weak expression in the enamel matrix.

The protein localises to the secreted. The protein resides in the golgi apparatus. Its subcellular location is the endoplasmic reticulum. Its function is as follows. Pseudokinase that acts as an allosteric activator of the Golgi serine/threonine protein kinase FAM20C and is involved in biomineralization of teeth. Forms a complex with FAM20C and increases the ability of FAM20C to phosphorylate the proteins that form the 'matrix' that guides the deposition of the enamel minerals. This is Pseudokinase FAM20A from Mus musculus (Mouse).